The following is a 104-amino-acid chain: ATP-dependent Clp protease adapter protein ClpS (104 aa).

Belongs to the ClpS family. As to quaternary structure, binds to the N-terminal domain of the chaperone ClpA.

Functionally, involved in the modulation of the specificity of the ClpAP-mediated ATP-dependent protein degradation. This is ATP-dependent Clp protease adapter protein ClpS from Burkholderia mallei (strain NCTC 10247).